The sequence spans 118 residues: Large ribosomal subunit protein bL20 (118 aa).

This sequence belongs to the bacterial ribosomal protein bL20 family.

In terms of biological role, binds directly to 23S ribosomal RNA and is necessary for the in vitro assembly process of the 50S ribosomal subunit. It is not involved in the protein synthesizing functions of that subunit. In Psychromonas ingrahamii (strain DSM 17664 / CCUG 51855 / 37), this protein is Large ribosomal subunit protein bL20.